Reading from the N-terminus, the 215-residue chain is MPDSTSSASRGGVRIARGASPWLLPTVATAALSLARARKSGRWAAVAVPTTALAAGMLWFFRDPEREITDGRVISPADGVVQSIMPWKDGRTRVAIFMSPLNVHVNRAPLAGTVTSVEHIPGGFVPAFNKESENNERVVWHFDTELGDIEMVQIAGAVARRIVPYLPEGTKVEQGERIGLIRFGSRVDIYLPEGIDVAVEVGQATTAGVTRIDRD.

The active-site Schiff-base intermediate with substrate; via pyruvic acid is the Ser-185. A Pyruvic acid (Ser); by autocatalysis modification is found at Ser-185.

The protein belongs to the phosphatidylserine decarboxylase family. PSD-A subfamily. In terms of assembly, heterodimer of a large membrane-associated beta subunit and a small pyruvoyl-containing alpha subunit. Pyruvate is required as a cofactor. Post-translationally, is synthesized initially as an inactive proenzyme. Formation of the active enzyme involves a self-maturation process in which the active site pyruvoyl group is generated from an internal serine residue via an autocatalytic post-translational modification. Two non-identical subunits are generated from the proenzyme in this reaction, and the pyruvate is formed at the N-terminus of the alpha chain, which is derived from the carboxyl end of the proenzyme. The post-translation cleavage follows an unusual pathway, termed non-hydrolytic serinolysis, in which the side chain hydroxyl group of the serine supplies its oxygen atom to form the C-terminus of the beta chain, while the remainder of the serine residue undergoes an oxidative deamination to produce ammonia and the pyruvoyl prosthetic group on the alpha chain.

It is found in the cell membrane. It catalyses the reaction a 1,2-diacyl-sn-glycero-3-phospho-L-serine + H(+) = a 1,2-diacyl-sn-glycero-3-phosphoethanolamine + CO2. The protein operates within phospholipid metabolism; phosphatidylethanolamine biosynthesis; phosphatidylethanolamine from CDP-diacylglycerol: step 2/2. In terms of biological role, catalyzes the formation of phosphatidylethanolamine (PtdEtn) from phosphatidylserine (PtdSer). The sequence is that of Phosphatidylserine decarboxylase proenzyme from Streptomyces griseus subsp. griseus (strain JCM 4626 / CBS 651.72 / NBRC 13350 / KCC S-0626 / ISP 5235).